Here is a 170-residue protein sequence, read N- to C-terminus: Large ribosomal subunit protein uL6m (170 aa).

It belongs to the universal ribosomal protein uL6 family.

It localises to the mitochondrion. The chain is Large ribosomal subunit protein uL6m (mrpl6) from Dictyostelium discoideum (Social amoeba).